The primary structure comprises 242 residues: Type III pantothenate kinase (242 aa).

5-12 is an ATP binding site; that stretch reads DLGNTRLK. Residues Y94 and 100 to 103 contribute to the substrate site; that span reads GCDR. D102 acts as the Proton acceptor in catalysis. T124 is a binding site for ATP. T175 is a binding site for substrate.

It belongs to the type III pantothenate kinase family. In terms of assembly, homodimer. NH4(+) is required as a cofactor. Requires K(+) as cofactor.

It localises to the cytoplasm. It carries out the reaction (R)-pantothenate + ATP = (R)-4'-phosphopantothenate + ADP + H(+). It functions in the pathway cofactor biosynthesis; coenzyme A biosynthesis; CoA from (R)-pantothenate: step 1/5. In terms of biological role, catalyzes the phosphorylation of pantothenate (Pan), the first step in CoA biosynthesis. The polypeptide is Type III pantothenate kinase (Psychrobacter arcticus (strain DSM 17307 / VKM B-2377 / 273-4)).